Here is a 118-residue protein sequence, read N- to C-terminus: MARIAGINIPDHKHTVIALTSIFGIGKTRSQSICASTGIAEHVKISELSEEQIEQLREAVAKFTVEGDLRREVTLSIKRLMDLGTYRGLRHRRGLPVRGQRTKTNARTRKGPRKPIKK.

The segment at 91–118 (HRRGLPVRGQRTKTNARTRKGPRKPIKK) is disordered.

Belongs to the universal ribosomal protein uS13 family. In terms of assembly, part of the 30S ribosomal subunit. Forms a loose heterodimer with protein S19. Forms two bridges to the 50S subunit in the 70S ribosome.

In terms of biological role, located at the top of the head of the 30S subunit, it contacts several helices of the 16S rRNA. In the 70S ribosome it contacts the 23S rRNA (bridge B1a) and protein L5 of the 50S subunit (bridge B1b), connecting the 2 subunits; these bridges are implicated in subunit movement. Contacts the tRNAs in the A and P-sites. The chain is Small ribosomal subunit protein uS13 from Serratia proteamaculans (strain 568).